Consider the following 310-residue polypeptide: Ribosome production factor 2 homolog (310 aa).

The Brix domain occupies 29–239 (KKTLILHGTK…VRRHRYPVES (211 aa)). The segment at 281–310 (LSNDVKGLKRERREAKKNKDHSKKQKINPE) is disordered. Over residues 295–310 (AKKNKDHSKKQKINPE) the composition is skewed to basic residues.

The protein belongs to the RPF2 family.

Its subcellular location is the nucleus. It localises to the nucleolus. In Oryza sativa subsp. japonica (Rice), this protein is Ribosome production factor 2 homolog.